A 332-amino-acid polypeptide reads, in one-letter code: Ketol-acid reductoisomerase (NADP(+)) 2 (332 aa).

The 181-residue stretch at 2–182 (AELFYDADAD…GGTRAGVIRT (181 aa)) folds into the KARI N-terminal Rossmann domain. Residues 25–28 (YGSQ), serine 51, serine 53, and 83–86 (DPIQ) contribute to the NADP(+) site. Histidine 108 is a catalytic residue. Position 134 (glycine 134) interacts with NADP(+). The KARI C-terminal knotted domain maps to 183–328 (TFTEETETDL…KELRKLMSWV (146 aa)). Residues aspartate 191, glutamate 195, glutamate 227, and glutamate 231 each coordinate Mg(2+). A substrate-binding site is contributed by serine 252.

Belongs to the ketol-acid reductoisomerase family. The cofactor is Mg(2+).

It carries out the reaction (2R)-2,3-dihydroxy-3-methylbutanoate + NADP(+) = (2S)-2-acetolactate + NADPH + H(+). The enzyme catalyses (2R,3R)-2,3-dihydroxy-3-methylpentanoate + NADP(+) = (S)-2-ethyl-2-hydroxy-3-oxobutanoate + NADPH + H(+). It participates in amino-acid biosynthesis; L-isoleucine biosynthesis; L-isoleucine from 2-oxobutanoate: step 2/4. Its pathway is amino-acid biosynthesis; L-valine biosynthesis; L-valine from pyruvate: step 2/4. Involved in the biosynthesis of branched-chain amino acids (BCAA). Catalyzes an alkyl-migration followed by a ketol-acid reduction of (S)-2-acetolactate (S2AL) to yield (R)-2,3-dihydroxy-isovalerate. In the isomerase reaction, S2AL is rearranged via a Mg-dependent methyl migration to produce 3-hydroxy-3-methyl-2-ketobutyrate (HMKB). In the reductase reaction, this 2-ketoacid undergoes a metal-dependent reduction by NADPH to yield (R)-2,3-dihydroxy-isovalerate. The chain is Ketol-acid reductoisomerase (NADP(+)) 2 from Streptomyces coelicolor (strain ATCC BAA-471 / A3(2) / M145).